The chain runs to 166 residues: Ribonuclease H2 subunit C (166 aa).

Methionine 1 is subject to N-acetylmethionine.

Belongs to the RNase H2 subunit C family. The RNase H2 complex is a heterotrimer composed of the catalytic subunit RNASEH2A and the non-catalytic subunits RNASEH2B and RNASEH2C.

It is found in the nucleus. In terms of biological role, non catalytic subunit of RNase H2, an endonuclease that specifically degrades the RNA of RNA:DNA hybrids. Participates in DNA replication, possibly by mediating the removal of lagging-strand Okazaki fragment RNA primers during DNA replication. Mediates the excision of single ribonucleotides from DNA:RNA duplexes. The polypeptide is Ribonuclease H2 subunit C (Rnaseh2c) (Mus musculus (Mouse)).